A 339-amino-acid chain; its full sequence is 4-hydroxy-2-oxovalerate aldolase 3 (339 aa).

Residues 7–259 (IRVTDTSLRD…KTGIDFFAIA (253 aa)) enclose the Pyruvate carboxyltransferase domain. Residue 15 to 16 (RD) participates in substrate binding. D16 provides a ligand contact to Mn(2+). H19 (proton acceptor) is an active-site residue. Substrate contacts are provided by S169 and H198. Mn(2+)-binding residues include H198 and H200. Y289 contacts substrate.

The protein belongs to the 4-hydroxy-2-oxovalerate aldolase family.

The catalysed reaction is (S)-4-hydroxy-2-oxopentanoate = acetaldehyde + pyruvate. This chain is 4-hydroxy-2-oxovalerate aldolase 3, found in Rhodococcus opacus (strain B4).